We begin with the raw amino-acid sequence, 129 residues long: Glycine cleavage system H protein (129 aa).

A Lipoyl-binding domain is found at 24-106 (TFTVGISEHA…YGDGWLFRIK (83 aa)). Position 65 is an N6-lipoyllysine (lysine 65).

This sequence belongs to the GcvH family. In terms of assembly, the glycine cleavage system is composed of four proteins: P, T, L and H. Requires (R)-lipoate as cofactor.

In terms of biological role, the glycine cleavage system catalyzes the degradation of glycine. The H protein shuttles the methylamine group of glycine from the P protein to the T protein. In Idiomarina loihiensis (strain ATCC BAA-735 / DSM 15497 / L2-TR), this protein is Glycine cleavage system H protein.